A 247-amino-acid chain; its full sequence is ATP synthase subunit a, chloroplastic (247 aa).

Helical transmembrane passes span 38–58 (QVLI…IIAV), 95–115 (VPFI…GALL), 134–154 (INTT…AGLT), 199–219 (LVVV…VMFL), and 220–240 (GLFT…AYIG).

This sequence belongs to the ATPase A chain family. F-type ATPases have 2 components, CF(1) - the catalytic core - and CF(0) - the membrane proton channel. CF(1) has five subunits: alpha(3), beta(3), gamma(1), delta(1), epsilon(1). CF(0) has four main subunits: a, b, b' and c.

The protein resides in the plastid. The protein localises to the chloroplast thylakoid membrane. In terms of biological role, key component of the proton channel; it plays a direct role in the translocation of protons across the membrane. This chain is ATP synthase subunit a, chloroplastic, found in Carica papaya (Papaya).